A 556-amino-acid chain; its full sequence is Formate--tetrahydrofolate ligase (556 aa).

Residue Thr65–Ser72 coordinates ATP.

It belongs to the formate--tetrahydrofolate ligase family.

It catalyses the reaction (6S)-5,6,7,8-tetrahydrofolate + formate + ATP = (6R)-10-formyltetrahydrofolate + ADP + phosphate. It participates in one-carbon metabolism; tetrahydrofolate interconversion. The protein is Formate--tetrahydrofolate ligase of Streptococcus thermophilus (strain CNRZ 1066).